A 435-amino-acid polypeptide reads, in one-letter code: Serine--tRNA ligase (435 aa).

Residue 240–242 (TAE) coordinates L-serine. An ATP-binding site is contributed by 271–273 (RSE). An L-serine-binding site is contributed by Glu-294. 358-361 (EISS) lines the ATP pocket. Ser-393 contacts L-serine.

It belongs to the class-II aminoacyl-tRNA synthetase family. Type-1 seryl-tRNA synthetase subfamily. Homodimer. The tRNA molecule binds across the dimer.

Its subcellular location is the cytoplasm. It catalyses the reaction tRNA(Ser) + L-serine + ATP = L-seryl-tRNA(Ser) + AMP + diphosphate + H(+). The catalysed reaction is tRNA(Sec) + L-serine + ATP = L-seryl-tRNA(Sec) + AMP + diphosphate + H(+). Its pathway is aminoacyl-tRNA biosynthesis; selenocysteinyl-tRNA(Sec) biosynthesis; L-seryl-tRNA(Sec) from L-serine and tRNA(Sec): step 1/1. Functionally, catalyzes the attachment of serine to tRNA(Ser). Is also able to aminoacylate tRNA(Sec) with serine, to form the misacylated tRNA L-seryl-tRNA(Sec), which will be further converted into selenocysteinyl-tRNA(Sec). The chain is Serine--tRNA ligase from Cupriavidus metallidurans (strain ATCC 43123 / DSM 2839 / NBRC 102507 / CH34) (Ralstonia metallidurans).